We begin with the raw amino-acid sequence, 292 residues long: 5,10-methylenetetrahydrofolate reductase (292 aa).

The active-site Proton donor/acceptor is Glu28. Thr59 contributes to the NADH binding site. Residues Tyr60, Ala62, His88, Arg118, Gly119, Asp120, Ala132, Tyr152, His156, Asp165, Asn168, Lys171, and Lys172 each contribute to the FAD site. A (6S)-5-methyl-5,6,7,8-tetrahydrofolate-binding site is contributed by Asp120. Gln183 is an NADH binding site. Gln183 is a (6S)-5-methyl-5,6,7,8-tetrahydrofolate binding site.

This sequence belongs to the methylenetetrahydrofolate reductase family. FAD is required as a cofactor.

The catalysed reaction is (6S)-5-methyl-5,6,7,8-tetrahydrofolate + NAD(+) = (6R)-5,10-methylene-5,6,7,8-tetrahydrofolate + NADH + H(+). It participates in one-carbon metabolism; tetrahydrofolate interconversion. Its pathway is amino-acid biosynthesis; L-methionine biosynthesis via de novo pathway. In terms of biological role, catalyzes the NADH-dependent reduction of 5,10-methylenetetrahydrofolate to 5-methyltetrahydrofolate. Is required to provide the methyl group necessary for methionine synthetase to convert homocysteine to methionine; the methyl group is given by 5-methyltetrahydrofolate. The protein is 5,10-methylenetetrahydrofolate reductase (metF) of Buchnera aphidicola subsp. Acyrthosiphon pisum (strain APS) (Acyrthosiphon pisum symbiotic bacterium).